We begin with the raw amino-acid sequence, 813 residues long: Sodium/hydrogen exchanger 2 (813 aa).

Helical transmembrane passes span 108–128 (IVPE…IIFG), 139–159 (TDVF…YFMP), 170–190 (IFWY…LSLF), 210–230 (LFGS…FENI), 238–258 (ILVF…YNLF), 279–299 (FFVV…IAAF), and 309–329 (VIEP…AEMF). Asn351 carries N-linked (GlcNAc...) asparagine glycosylation. A run of 4 helical transmembrane segments spans residues 362-382 (YFMK…MGVS), 393-413 (AFVC…VFVL), 431-451 (FIIA…FLLP), and 460-480 (LFIT…GITI). Positions 649–661 (LRKDNSLNRERRA) are enriched in basic and acidic residues. 2 disordered regions span residues 649–709 (LRKD…NLQP) and 736–813 (DVGS…NEKP). Polar residues predominate over residues 687–696 (VSNADGNSSD). Composition is skewed to basic and acidic residues over residues 770–781 (KDQRFGRGREDS) and 797–813 (RASE…NEKP).

This sequence belongs to the monovalent cation:proton antiporter 1 (CPA1) transporter (TC 2.A.36) family. In terms of assembly, interacts with CHP1 and CHP2. In terms of tissue distribution, predominantly in small intestine, colon, and stomach, with much lower levels in skeletal muscle, kidney, brain, testis, uterus, heart and lung.

It is found in the apical cell membrane. It catalyses the reaction Na(+)(in) + H(+)(out) = Na(+)(out) + H(+)(in). With respect to regulation, li(+) activates Na(+)/H(+) exchanger. Plasma membrane Na(+)/H(+) antiporter. Mediates the electroneutral exchange of intracellular H(+) ions for extracellular Na(+). Major apical Na(+)/H(+) exchanger in the base of the colonic crypt. Controls in the colonic crypt intracellular pH (pHi) to direct colonic epithelial cell differentiation into the absorptive enterocyte lineage at the expense of the secretory lineage. This is Sodium/hydrogen exchanger 2 (Slc9a2) from Rattus norvegicus (Rat).